The chain runs to 398 residues: S-adenosylmethionine synthase 2 (398 aa).

An ATP-binding site is contributed by His16. Mg(2+) is bound at residue Asp18. Position 51 (Glu51) interacts with K(+). L-methionine contacts are provided by Glu64 and Gln108. The flexible loop stretch occupies residues 108-118 (QSADIAQGVDA). Residues 176–178 (DSK), 242–243 (KF), Asp251, 257–258 (RK), Ala274, and Lys278 contribute to the ATP site. Asp251 contributes to the L-methionine binding site. Residue Lys282 coordinates L-methionine.

The protein belongs to the AdoMet synthase family. In terms of assembly, homotetramer; dimer of dimers. Mg(2+) serves as cofactor. K(+) is required as a cofactor.

Its subcellular location is the cytoplasm. The catalysed reaction is L-methionine + ATP + H2O = S-adenosyl-L-methionine + phosphate + diphosphate. Its pathway is amino-acid biosynthesis; S-adenosyl-L-methionine biosynthesis; S-adenosyl-L-methionine from L-methionine: step 1/1. In terms of biological role, catalyzes the formation of S-adenosylmethionine (AdoMet) from methionine and ATP. The overall synthetic reaction is composed of two sequential steps, AdoMet formation and the subsequent tripolyphosphate hydrolysis which occurs prior to release of AdoMet from the enzyme. This is S-adenosylmethionine synthase 2 from Rhodopseudomonas palustris (strain BisB18).